Here is a 794-residue protein sequence, read N- to C-terminus: Copper-exporting P-type ATPase (794 aa).

2 HMA domains span residues 4–69 (TTLT…YDVA) and 71–137 (EQVE…YDAE). The Cu(+) site is built by cysteine 15, cysteine 18, cysteine 82, and cysteine 85. The next 6 helical transmembrane spans lie at 161-181 (IISAILSLPLLLVMVVHISPI), 186-206 (ILVNPWVQLILSTPVQFIIGW), 225-245 (VLVAVGTSAAYFYSIYEMMMW), 255-275 (LYFETSAILITLILLGKYLEA), 410-430 (YFVPIVVSIAVITFIIWIIFV), and 437-457 (PALVSAISVLVIACPCALGLA). Aspartate 494 acts as the 4-aspartylphosphate intermediate in catalysis. Aspartate 689 and aspartate 693 together coordinate Mg(2+). 2 consecutive transmembrane segments (helical) span residues 747-767 (LFWAFGYNVAGIPIAACGLLA) and 773-789 (AAMALSSVSVVMNALRL).

This sequence belongs to the cation transport ATPase (P-type) (TC 3.A.3) family. Type IB subfamily.

Its subcellular location is the cell membrane. It carries out the reaction Cu(+)(in) + ATP + H2O = Cu(+)(out) + ADP + phosphate + H(+). Its function is as follows. Involved in copper export. The protein is Copper-exporting P-type ATPase (copA) of Staphylococcus epidermidis (strain ATCC 35984 / DSM 28319 / BCRC 17069 / CCUG 31568 / BM 3577 / RP62A).